Here is a 508-residue protein sequence, read N- to C-terminus: Photosystem II CP47 reaction center protein (508 aa).

6 helical membrane passes run 21–36, 101–115, 140–156, 203–218, 237–252, and 457–472; these read SVHI…WAGS, IVFS…IWHW, GIHL…FGAF, IAAG…FHLS, VLSS…AFVV, and SFAL…HGSR.

The protein belongs to the PsbB/PsbC family. PsbB subfamily. PSII is composed of 1 copy each of membrane proteins PsbA, PsbB, PsbC, PsbD, PsbE, PsbF, PsbH, PsbI, PsbJ, PsbK, PsbL, PsbM, PsbT, PsbX, PsbY, PsbZ, Psb30/Ycf12, at least 3 peripheral proteins of the oxygen-evolving complex and a large number of cofactors. It forms dimeric complexes. Binds multiple chlorophylls. PSII binds additional chlorophylls, carotenoids and specific lipids. serves as cofactor.

Its subcellular location is the plastid. It localises to the chloroplast thylakoid membrane. One of the components of the core complex of photosystem II (PSII). It binds chlorophyll and helps catalyze the primary light-induced photochemical processes of PSII. PSII is a light-driven water:plastoquinone oxidoreductase, using light energy to abstract electrons from H(2)O, generating O(2) and a proton gradient subsequently used for ATP formation. This chain is Photosystem II CP47 reaction center protein, found in Lobularia maritima (Sweet alyssum).